The sequence spans 136 residues: Histone H3.2 (136 aa).

Residues 1-20 (MARTKQTARKSTGGKAPRKQ) are disordered. An N6-methylated lysine modification is found at Lys5. At Lys10 the chain carries N6-acetyllysine; alternate. The residue at position 10 (Lys10) is an N6-methylated lysine; alternate. Ser11 is subject to Phosphoserine. Thr12 is subject to Phosphothreonine. Lys15 bears the N6-acetyllysine mark. N6-acetyllysine; alternate is present on residues Lys19 and Lys24. N6-methylated lysine; alternate is present on residues Lys19 and Lys24. Lys37 carries the N6-methylated lysine modification.

It belongs to the histone H3 family. In terms of assembly, the nucleosome is a histone octamer containing two molecules each of H2A, H2B, H3 and H4 assembled in one H3-H4 heterotetramer and two H2A-H2B heterodimers. The octamer wraps approximately 147 bp of DNA. Acetylation is generally linked to gene activation. Can be acetylated to form H3K9ac, H3K14ac, H3K18ac and H3K23ac. H3K9ac could compete with H3K9me and prevent gene silencing. H3K9ac is restricted to euchromatin. In terms of processing, methylated to form mainly H3K4me, H3K9me, H3K18me, H3K23me and H3K36me. H3K4me1/2/3, H3K9me3 and H3K36me1/2/3 are typical marks for euchromatin, whereas heterochromatic chromocenters are enriched in H3K9me1/2. H2BK143ub1 is probably prerequisite for H3K4me. Post-translationally, can be phosphorylated to form H3S10ph and H3T11ph.

Its subcellular location is the nucleus. The protein localises to the chromosome. Core component of nucleosome. Nucleosomes wrap and compact DNA into chromatin, limiting DNA accessibility to the cellular machineries which require DNA as a template. Histones thereby play a central role in transcription regulation, DNA repair, DNA replication and chromosomal stability. DNA accessibility is regulated via a complex set of post-translational modifications of histones, also called histone code, and nucleosome remodeling. This chain is Histone H3.2, found in Cichorium intybus (Chicory).